A 73-amino-acid chain; its full sequence is Methionyl-tRNA formyltransferase (73 aa).

This sequence belongs to the Fmt family.

The enzyme catalyses L-methionyl-tRNA(fMet) + (6R)-10-formyltetrahydrofolate = N-formyl-L-methionyl-tRNA(fMet) + (6S)-5,6,7,8-tetrahydrofolate + H(+). Functionally, attaches a formyl group to the free amino group of methionyl-tRNA(fMet). The formyl group appears to play a dual role in the initiator identity of N-formylmethionyl-tRNA by promoting its recognition by IF2 and preventing the misappropriation of this tRNA by the elongation apparatus. The sequence is that of Methionyl-tRNA formyltransferase (fmt) from Rickettsia rickettsii.